Here is a 90-residue protein sequence, read N- to C-terminus: Small ribosomal subunit protein uS17 (90 aa).

This sequence belongs to the universal ribosomal protein uS17 family. As to quaternary structure, part of the 30S ribosomal subunit.

In terms of biological role, one of the primary rRNA binding proteins, it binds specifically to the 5'-end of 16S ribosomal RNA. In Methylobacillus flagellatus (strain ATCC 51484 / DSM 6875 / VKM B-1610 / KT), this protein is Small ribosomal subunit protein uS17.